The following is a 443-amino-acid chain: ATP-dependent RNA helicase SUB2 (443 aa).

The short motif at 60–88 (TGFRDFLLKPELLRAITDCGFEHPSEVQQ) is the Q motif element. One can recognise a Helicase ATP-binding domain in the interval 91–266 (IPTAILKVDV…KKFMRNPLEV (176 aa)). 104-111 (AKSGLGKT) contacts ATP. A DEAD box motif is present at residues 213–216 (DECD). The 146-residue stretch at 294–439 (KLNELLDNLE…EYPEEGVDAS (146 aa)) folds into the Helicase C-terminal domain.

Belongs to the DEAD box helicase family. DECD subfamily.

It localises to the nucleus. It carries out the reaction ATP + H2O = ADP + phosphate + H(+). ATP-binding RNA helicase involved in transcription elongation and required for the export of mRNA out of the nucleus. SUB2 also plays a role in pre-mRNA splicing and spliceosome assembly. May be involved in rDNA and telomeric silencing, and maintenance of genome integrity. This is ATP-dependent RNA helicase SUB2 (SUB2) from Coccidioides immitis (strain RS) (Valley fever fungus).